Here is a 466-residue protein sequence, read N- to C-terminus: Muscarinic acetylcholine receptor M2 (466 aa).

Residues 1–22 (MNNSTNSSNNGLAITSPYKTFE) are Extracellular-facing. 3 N-linked (GlcNAc...) asparagine glycosylation sites follow: Asn-2, Asn-3, and Asn-6. Residues 23 to 45 (VVFIVLVAGSLSLVTIIGNILVM) traverse the membrane as a helical segment. Residues 46-59 (VSIKVNRHLQTVNN) are Cytoplasmic-facing. A helical membrane pass occupies residues 60-80 (YFLFSLACADLIIGVFSMNLY). Residues 81–97 (TLYTVIGYWPLGPVVCD) are Extracellular-facing. The cysteines at positions 96 and 176 are disulfide-linked. A helical transmembrane segment spans residues 98–119 (LWLALDYVVSNASVMNLLIISF). The short motif at 120–122 (DRY) is the Important for signaling element. The Cytoplasmic portion of the chain corresponds to 120 to 139 (DRYFCVTKPLTYPVKRTTKM). A helical transmembrane segment spans residues 140–162 (AGMMIAAAWVLSFILWAPAILFW). Topologically, residues 163–184 (QFIVGVRTVEDGECYIQFFSNA) are extracellular. A helical membrane pass occupies residues 185 to 209 (AVTFGTAIAAFYLPVIIMTVLYWHI). At 210–387 (SRASKSRIKK…PPSREKKVTR (178 aa)) the chain is on the cytoplasmic side. The segment at 218–320 (KKEKKEPVAN…SLGHSKDDNS (103 aa)) is disordered. Ser-232 is subject to Phosphoserine. Residues 254 to 270 (GLEHNKIQNGKAPRDGG) show a composition bias toward basic and acidic residues. 2 stretches are compositionally biased toward polar residues: residues 284–293 (NDSTSVSAVA) and 304–313 (DENTVSTSLG). Residues 388–410 (TILAILLAFIITWAPYNVMVLIN) traverse the membrane as a helical segment. At 411–418 (TFCAPCIP) the chain is on the extracellular side. Cys-413 and Cys-416 are oxidised to a cystine. A helical transmembrane segment spans residues 419–442 (NTVWTIGYWLCYINSTINPACYAL). The Important for signaling motif lies at 436–440 (NPACY). At 443-466 (CNATFKKTFKHLLMCHYKNIGATR) the chain is on the cytoplasmic side. Phosphothreonine is present on residues Thr-446, Thr-450, and Thr-465.

The protein belongs to the G-protein coupled receptor 1 family. Muscarinic acetylcholine receptor subfamily. CHRM2 sub-subfamily. Interacts with ARRB1 and ARRB2. Interacts with RACK1; the interaction regulates CHRM2 internalization. Post-translationally, phosphorylated in response to agonist treatment.

The protein resides in the cell membrane. Its subcellular location is the postsynaptic cell membrane. Its function is as follows. The muscarinic acetylcholine receptor mediates various cellular responses, including inhibition of adenylate cyclase, breakdown of phosphoinositides and modulation of potassium channels through the action of G proteins. Primary transducing effect is adenylate cyclase inhibition. Signaling promotes phospholipase C activity, leading to the release of inositol trisphosphate (IP3); this then triggers calcium ion release into the cytosol. The chain is Muscarinic acetylcholine receptor M2 (Chrm2) from Mus musculus (Mouse).